A 135-amino-acid chain; its full sequence is UPF0251 protein Hore_18270 (135 aa).

It belongs to the UPF0251 family.

This chain is UPF0251 protein Hore_18270, found in Halothermothrix orenii (strain H 168 / OCM 544 / DSM 9562).